The chain runs to 88 residues: Small ribosomal subunit protein uS17 (88 aa).

This sequence belongs to the universal ribosomal protein uS17 family. As to quaternary structure, part of the 30S ribosomal subunit.

Its function is as follows. One of the primary rRNA binding proteins, it binds specifically to the 5'-end of 16S ribosomal RNA. In Ruthia magnifica subsp. Calyptogena magnifica, this protein is Small ribosomal subunit protein uS17.